The chain runs to 800 residues: Ent-copalyl diphosphate synthase 2 (800 aa).

The segment at 52–80 (QGQETRERRQLDDDEHARPPQGGDDDVAA) is disordered. Basic and acidic residues predominate over residues 55-69 (ETRERRQLDDDEHAR). Lys-242 provides a ligand contact to substrate. The Mg(2+) site is built by Asp-374 and Asp-376. The DXDD motif motif lies at 374–377 (DIDD). Lys-461 provides a ligand contact to substrate.

Belongs to the terpene synthase family. Requires Mg(2+) as cofactor.

It catalyses the reaction (2E,6E,10E)-geranylgeranyl diphosphate = ent-copalyl diphosphate. Functionally, catalyzes the conversion of geranylgeranyl diphosphate to the phytoalexin precursor ent-copalyl diphosphate. This is Ent-copalyl diphosphate synthase 2 (CPS2) from Oryza sativa subsp. indica (Rice).